Reading from the N-terminus, the 489-residue chain is N-succinylglutamate 5-semialdehyde dehydrogenase (489 aa).

216–221 is an NAD(+) binding site; that stretch reads GSAATG. Catalysis depends on residues E239 and C273.

This sequence belongs to the aldehyde dehydrogenase family. AstD subfamily.

It carries out the reaction N-succinyl-L-glutamate 5-semialdehyde + NAD(+) + H2O = N-succinyl-L-glutamate + NADH + 2 H(+). It participates in amino-acid degradation; L-arginine degradation via AST pathway; L-glutamate and succinate from L-arginine: step 4/5. In terms of biological role, catalyzes the NAD-dependent reduction of succinylglutamate semialdehyde into succinylglutamate. The polypeptide is N-succinylglutamate 5-semialdehyde dehydrogenase (Erwinia tasmaniensis (strain DSM 17950 / CFBP 7177 / CIP 109463 / NCPPB 4357 / Et1/99)).